The chain runs to 522 residues: L-tyrosine/L-DOPA decarboxylase 2 (522 aa).

Tandem repeats lie at residues 75–132 (KDVH…TELE) and 135–186 (VMDW…GREH). Positions 75–186 (KDVHDDIVPG…RILDRIGREH (112 aa)) are 2 X approximate tandem repeats. The pyridoxal 5'-phosphate site is built by Thr163, Cys164, Thr258, and Asn312. An N6-(pyridoxal phosphate)lysine modification is found at Lys315.

The protein belongs to the group II decarboxylase family. Pyridoxal 5'-phosphate is required as a cofactor. As to expression, strongly expressed in all tissues, particularly in thick roots.

The catalysed reaction is L-tyrosine + H(+) = tyramine + CO2. It catalyses the reaction L-dopa + H(+) = dopamine + CO2. It functions in the pathway aromatic compound metabolism. The protein operates within alkaloid biosynthesis. In terms of biological role, aromatic amino acid decarboxylase participating in the biosynthesis of natural products derived from phenylethylamine, including mescaline, a natural hallucinogen potentially used in psychotherapeutic treatments. Catalyzes the decarboxylation of L-tyrosine and L-DOPA. The polypeptide is L-tyrosine/L-DOPA decarboxylase 2 (Lophophora williamsii (Peyote)).